Here is a 142-residue protein sequence, read N- to C-terminus: Hemoglobin subunit alpha (142 aa).

Residues valine 2–arginine 142 form the Globin domain. The residue at position 4 (serine 4) is a Phosphoserine. Lysine 8 is modified (N6-succinyllysine). Phosphothreonine is present on threonine 9. Lysine 12 is subject to N6-succinyllysine. Lysine 17 carries the N6-acetyllysine; alternate modification. Residue lysine 17 is modified to N6-succinyllysine; alternate. At tyrosine 25 the chain carries Phosphotyrosine. Serine 36 bears the Phosphoserine mark. Lysine 41 carries the N6-succinyllysine modification. Serine 50 is modified (phosphoserine). Residue histidine 59 coordinates O2. Heme b is bound at residue histidine 88. The residue at position 103 (serine 103) is a Phosphoserine. Threonine 109 carries the post-translational modification Phosphothreonine. A phosphoserine mark is found at serine 125 and serine 132. Threonine 135 and threonine 138 each carry phosphothreonine. Serine 139 is subject to Phosphoserine.

This sequence belongs to the globin family. As to quaternary structure, heterotetramer of two alpha chains and two beta chains. In terms of tissue distribution, red blood cells.

In terms of biological role, involved in oxygen transport from the lung to the various peripheral tissues. Functionally, hemopressin acts as an antagonist peptide of the cannabinoid receptor CNR1. Hemopressin-binding efficiently blocks cannabinoid receptor CNR1 and subsequent signaling. The polypeptide is Hemoglobin subunit alpha (HBA) (Piliocolobus badius (Western red colobus)).